We begin with the raw amino-acid sequence, 459 residues long: MPDTLLDPTTLGDLLRVASAPDYARWEDQIRRTGAGANPIHLTGWTLHKDKTTGETLHHYTTAVEPGGRLRLACGNRRASRCPSCAWTYAGDTYHLIRAGLAGDDRRDIPATVRDHPRVFATLTAPSFGPVHNRPDHGTCRCGTRHAPDAPELGAALDPTTYDYAGAVLFNNHAGQLWQRFTTRLRREIAARAGLSRRELPDCLRVSYGKVAEFQKRGALHFHAVIRLDGPEGPDTTPPAWATVALLADAIRAAAAHSYTSVSVPAAEDQPARTFRWGTQLDVRPVKAFGDGSDITEQAVASYVAKYATKAAENTGTLDRRIGELSELDRHDVPDHTRRLVEACKMLDPLYPERRLWAWAHMLGFRGHFSSKSRRYSTTLGALRQARADYRAAQEHAALALDDREPDTVLVLADWQYAGHGHTPGESVLAATIARNLQLNRETAREAVRDQLDQEGVAA.

Essential for pSAM2 replication. This chain is Replication initiator protein (repSA), found in Streptomyces ambofaciens.